Consider the following 117-residue polypeptide: UPF0145 protein PH1682 (117 aa).

The protein belongs to the UPF0145 family.

This is UPF0145 protein PH1682 from Pyrococcus horikoshii (strain ATCC 700860 / DSM 12428 / JCM 9974 / NBRC 100139 / OT-3).